The chain runs to 141 residues: ATP synthase epsilon chain (141 aa).

The protein belongs to the ATPase epsilon chain family. In terms of assembly, F-type ATPases have 2 components, CF(1) - the catalytic core - and CF(0) - the membrane proton channel. CF(1) has five subunits: alpha(3), beta(3), gamma(1), delta(1), epsilon(1). CF(0) has three main subunits: a, b and c.

The protein localises to the cell inner membrane. Functionally, produces ATP from ADP in the presence of a proton gradient across the membrane. The polypeptide is ATP synthase epsilon chain (Chromohalobacter salexigens (strain ATCC BAA-138 / DSM 3043 / CIP 106854 / NCIMB 13768 / 1H11)).